A 28-amino-acid polypeptide reads, in one-letter code: Beta-bungarotoxin B chain-like (28 aa).

The first 24 residues, Met-1–Ser-24, serve as a signal peptide directing secretion.

Heterodimer; disulfide-linked. The A chains have phospholipase A2 activity and the B chains show homology with the basic protease inhibitors. Expressed by the venom gland.

Its subcellular location is the secreted. Functionally, beta-1-bungarotoxin is a presynaptic neurotoxin of the venom. The B chain is homologous to venom basic protease inhibitors but has no protease inhibitor activity and blocks voltage-gated potassium channels (Kv). The polypeptide is Beta-bungarotoxin B chain-like (Bungarus multicinctus (Many-banded krait)).